The primary structure comprises 703 residues: Putative glycosyl hydrolase ecdE (703 aa).

Residues 1–21 (MKLNIFASAILLCTSAFPVAA) form the signal peptide. The active site involves Asp47. N-linked (GlcNAc...) asparagine glycosylation is found at Asn104, Asn120, Asn293, Asn397, Asn443, and Asn641.

It belongs to the glycosyl hydrolase 32 family.

The protein is Putative glycosyl hydrolase ecdE of Aspergillus rugulosus (Emericella rugulosa).